The primary structure comprises 382 residues: Galactokinase (382 aa).

Substrate is bound at residue 34-37 (EHTD). 124 to 130 (GAGLSSS) is an ATP binding site. Residues Ser-130 and Glu-162 each contribute to the Mg(2+) site. Catalysis depends on Asp-174, which acts as the Proton acceptor. Tyr-223 is a substrate binding site.

Belongs to the GHMP kinase family. GalK subfamily.

It localises to the cytoplasm. It catalyses the reaction alpha-D-galactose + ATP = alpha-D-galactose 1-phosphate + ADP + H(+). The protein operates within carbohydrate metabolism; galactose metabolism. Its function is as follows. Catalyzes the transfer of the gamma-phosphate of ATP to D-galactose to form alpha-D-galactose-1-phosphate (Gal-1-P). This is Galactokinase from Escherichia coli O127:H6 (strain E2348/69 / EPEC).